The sequence spans 276 residues: Acyl-[acyl-carrier-protein]--UDP-N-acetylglucosamine O-acyltransferase (276 aa).

It belongs to the transferase hexapeptide repeat family. LpxA subfamily. In terms of assembly, homotrimer.

The protein localises to the cytoplasm. It carries out the reaction a (3R)-hydroxyacyl-[ACP] + UDP-N-acetyl-alpha-D-glucosamine = a UDP-3-O-[(3R)-3-hydroxyacyl]-N-acetyl-alpha-D-glucosamine + holo-[ACP]. It functions in the pathway glycolipid biosynthesis; lipid IV(A) biosynthesis; lipid IV(A) from (3R)-3-hydroxytetradecanoyl-[acyl-carrier-protein] and UDP-N-acetyl-alpha-D-glucosamine: step 1/6. Involved in the biosynthesis of lipid A, a phosphorylated glycolipid that anchors the lipopolysaccharide to the outer membrane of the cell. This Gloeothece citriformis (strain PCC 7424) (Cyanothece sp. (strain PCC 7424)) protein is Acyl-[acyl-carrier-protein]--UDP-N-acetylglucosamine O-acyltransferase.